The following is a 159-amino-acid chain: Ribosome-binding factor A (159 aa).

Basic and acidic residues-rich tracts occupy residues A118–E128 and D137–S146. The disordered stretch occupies residues A118–D159.

It belongs to the RbfA family. In terms of assembly, monomer. Binds 30S ribosomal subunits, but not 50S ribosomal subunits or 70S ribosomes.

The protein resides in the cytoplasm. Its function is as follows. One of several proteins that assist in the late maturation steps of the functional core of the 30S ribosomal subunit. Associates with free 30S ribosomal subunits (but not with 30S subunits that are part of 70S ribosomes or polysomes). Required for efficient processing of 16S rRNA. May interact with the 5'-terminal helix region of 16S rRNA. This Rhodococcus erythropolis (strain PR4 / NBRC 100887) protein is Ribosome-binding factor A.